We begin with the raw amino-acid sequence, 154 residues long: Myoglobin (154 aa).

One can recognise a Globin domain in the interval 2–148 (GLSDGEWQLV…FRNDMAAKYK (147 aa)). Position 4 is a phosphoserine (S4). Position 65 (H65) interacts with nitrite. H65 serves as a coordination point for O2. The residue at position 68 (T68) is a Phosphothreonine. H94 serves as a coordination point for heme b.

Belongs to the globin family. In terms of assembly, monomeric.

It is found in the cytoplasm. Its subcellular location is the sarcoplasm. The catalysed reaction is Fe(III)-heme b-[protein] + nitric oxide + H2O = Fe(II)-heme b-[protein] + nitrite + 2 H(+). The enzyme catalyses H2O2 + AH2 = A + 2 H2O. In terms of biological role, monomeric heme protein which primary function is to store oxygen and facilitate its diffusion within muscle tissues. Reversibly binds oxygen through a pentacoordinated heme iron and enables its timely and efficient release as needed during periods of heightened demand. Depending on the oxidative conditions of tissues and cells, and in addition to its ability to bind oxygen, it also has a nitrite reductase activity whereby it regulates the production of bioactive nitric oxide. Under stress conditions, like hypoxia and anoxia, it also protects cells against reactive oxygen species thanks to its pseudoperoxidase activity. In Ochotona curzoniae (Black-lipped pika), this protein is Myoglobin (MB).